A 69-amino-acid polypeptide reads, in one-letter code: Dodecin (69 aa).

3 to 5 (KVY) lines the FMN pocket. CoA-binding positions include K6, R28, and 32–34 (TLR). Positions 37, 38, 45, 57, and 65 each coordinate FMN. 65 to 67 (RLE) is a CoA binding site.

The protein belongs to the dodecin family. As to quaternary structure, homododecamer; four homotrimers assemble to form a dodecameric hollow sphere with an outer diameter of about 60 Angstroms. Flavin dimers are bound between subunits with a stoichiometry of 6 flavin dimers per dodecamer. Besides, trimeric coenzyme A molecules can be bound between subunits. A dodecamer can bind simultaneously 12 flavin and 12 coenzyme A molecules.

May function as storage protein that sequesters various flavins and other cofactors, thereby protecting the cell against undesirable reactions mediated by the free cofactors. Binds and sequesters FMN, FAD, lumiflavin and lumichrome, and can also bind coenzyme A. The chain is Dodecin from Thermus thermophilus (strain ATCC 27634 / DSM 579 / HB8).